The following is a 100-amino-acid chain: NADH-quinone oxidoreductase subunit K (100 aa).

The next 3 helical transmembrane spans lie at 3–23 (PTAY…IGVL), 29–49 (IMIF…LVAF), and 63–83 (FIVM…IVAI).

This sequence belongs to the complex I subunit 4L family. In terms of assembly, NDH-1 is composed of 15 different subunits. Subunits NuoA, H, J, K, L, M, N constitute the membrane sector of the complex.

It is found in the cell membrane. The enzyme catalyses a quinone + NADH + 5 H(+)(in) = a quinol + NAD(+) + 4 H(+)(out). Functionally, NDH-1 shuttles electrons from NADH, via FMN and iron-sulfur (Fe-S) centers, to quinones in the respiratory chain. The immediate electron acceptor for the enzyme in this species is believed to be a menaquinone. Couples the redox reaction to proton translocation (for every two electrons transferred, four hydrogen ions are translocated across the cytoplasmic membrane), and thus conserves the redox energy in a proton gradient. The sequence is that of NADH-quinone oxidoreductase subunit K from Deinococcus geothermalis (strain DSM 11300 / CIP 105573 / AG-3a).